The sequence spans 210 residues: Ovomucoid (210 aa).

A signal peptide spans 1-24; the sequence is MAMAGVFVLFSFVLCGFLPDAAFG. Kazal-like domains lie at 25-88, 89-153, and 156-210; these read AEVD…ECKE, TVPM…GCRK, and AAVS…FGKC. Intrachain disulfides connect Cys29/Cys68, Cys46/Cys65, and Cys54/Cys86. N-linked (GlcNAc...) asparagine glycosylation occurs at Asn34. 3 N-linked (GlcNAc...) asparagine glycosylation sites follow: Asn77, Asn93, and Asn99. Cystine bridges form between Cys94-Cys133, Cys111-Cys130, Cys119-Cys151, Cys162-Cys192, Cys170-Cys189, and Cys178-Cys210. An N-linked (GlcNAc...) asparagine; partial glycan is attached at Asn199.

It localises to the secreted. Its function is as follows. Serine protease inhibitor. Inhibits trypsin. The polypeptide is Ovomucoid (Gallus gallus (Chicken)).